Consider the following 516-residue polypeptide: tRNA-guanine(15) transglycosylase (516 aa).

Aspartate 93 serves as the catalytic Nucleophile. Residues aspartate 128 and alanine 196 each coordinate substrate. Zn(2+) is bound by residues cysteine 279, cysteine 281, and cysteine 284. The segment covering 488-502 (LSAVSERLGDEASVG) has biased composition (low complexity). The segment at 488 to 516 (LSAVSERLGDEASVGGDDGDDGGSASSAE) is disordered.

This sequence belongs to the archaeosine tRNA-ribosyltransferase family. Requires Zn(2+) as cofactor.

It carries out the reaction guanosine(15) in tRNA + 7-cyano-7-deazaguanine = 7-cyano-7-carbaguanosine(15) in tRNA + guanine. Its pathway is tRNA modification; archaeosine-tRNA biosynthesis. Exchanges the guanine residue with 7-cyano-7-deazaguanine (preQ0) at position 15 in the dihydrouridine loop (D-loop) of archaeal tRNAs. This is tRNA-guanine(15) transglycosylase from Haloferax volcanii (strain ATCC 29605 / DSM 3757 / JCM 8879 / NBRC 14742 / NCIMB 2012 / VKM B-1768 / DS2) (Halobacterium volcanii).